We begin with the raw amino-acid sequence, 218 residues long: Small ribosomal subunit protein uS3c (218 aa).

One can recognise a KH type-2 domain in the interval 47-118 (VQKHMRISSG…RLNITITRIA (72 aa)).

Belongs to the universal ribosomal protein uS3 family. Part of the 30S ribosomal subunit.

The protein localises to the plastid. It is found in the chloroplast. This Amborella trichopoda protein is Small ribosomal subunit protein uS3c (rps3).